We begin with the raw amino-acid sequence, 762 residues long: FAST kinase domain-containing protein 5, mitochondrial (762 aa).

Phosphoserine is present on Ser95. Lys506 bears the N6-acetyllysine mark. In terms of domain architecture, RAP spans 695–755 (LAIQFTNKNQ…RLEKLAYLHE (61 aa)).

The protein belongs to the FAST kinase family. Found in a complex with GRSF1, DDX28, DHX30 and FASTKD2. Associates with the 12S mitochondrial rRNA (12S mt-rRNA). As to expression, expression detected in spleen, testis, colon, heart, smooth muscle, kidney, brain, lung, liver, brown and white adipose tissue.

It localises to the mitochondrion matrix. The protein resides in the mitochondrion nucleoid. Plays an important role in the processing of non-canonical mitochondrial mRNA precursors. The sequence is that of FAST kinase domain-containing protein 5, mitochondrial (Fastkd5) from Mus musculus (Mouse).